Reading from the N-terminus, the 264-residue chain is Transmembrane protein 41A (264 aa).

The N-terminal stretch at 1 to 17 (MHSLLGLLLVFAGSTFA) is a signal peptide. The next 5 helical transmembrane spans lie at 67–87 (VYVF…AIPG), 90–110 (FLNV…LCCV), 153–173 (LFFF…FLNL), 175–195 (APIL…GLIP), and 219–239 (WETA…GTLI). Residues 96–207 (GALFGPWLGL…FICVQTGSIL (112 aa)) form a VTT domain region.

Belongs to the TMEM41 family.

It localises to the membrane. This Bos taurus (Bovine) protein is Transmembrane protein 41A (TMEM41A).